A 434-amino-acid chain; its full sequence is Ribosomal protein uS12 methylthiotransferase RimO (434 aa).

One can recognise an MTTase N-terminal domain in the interval 1–107; the sequence is MHLGCEKNLV…ILNVLQRIEQ (107 aa). Cysteine 5, cysteine 41, cysteine 70, cysteine 145, cysteine 149, and cysteine 152 together coordinate [4Fe-4S] cluster. In terms of domain architecture, Radical SAM core spans 131–360; sequence TTGKAVAYLK…ISIQQPIAEL (230 aa). Residues 363-434 enclose the TRAM domain; the sequence is QNWIGRTVDV…DLYDLTGQVV (72 aa).

The protein belongs to the methylthiotransferase family. RimO subfamily. The cofactor is [4Fe-4S] cluster.

The protein localises to the cytoplasm. The enzyme catalyses L-aspartate(89)-[ribosomal protein uS12]-hydrogen + (sulfur carrier)-SH + AH2 + 2 S-adenosyl-L-methionine = 3-methylsulfanyl-L-aspartate(89)-[ribosomal protein uS12]-hydrogen + (sulfur carrier)-H + 5'-deoxyadenosine + L-methionine + A + S-adenosyl-L-homocysteine + 2 H(+). Catalyzes the methylthiolation of an aspartic acid residue of ribosomal protein uS12. The polypeptide is Ribosomal protein uS12 methylthiotransferase RimO (Prochlorococcus marinus (strain SARG / CCMP1375 / SS120)).